The primary structure comprises 911 residues: Ribonuclease J (911 aa).

The transit peptide at 1–70 directs the protein to the chloroplast; sequence MMKPASLQGF…VTSAPASGTS (70 aa). Residues 58–90 are disordered; the sequence is SCSVTSAPASGTSSSSKTPRRRSGRLEGVGKSM. Residues 63–74 show a composition bias toward low complexity; it reads SAPASGTSSSSK. Zn(2+) contacts are provided by histidine 175, histidine 177, aspartate 179, histidine 180, histidine 245, and aspartate 267. Substrate-binding positions include 336 to 338 and 468 to 472; these read ASN and HTSGH. Residue histidine 494 coordinates Zn(2+). Disordered stretches follow at residues 695–723 and 735–824; these read VEGNDKRSRAKKAPSQEASPKEVDRTLED and EETA…WKPE. Basic and acidic residues-rich tracts occupy residues 713–722 and 783–795; these read SPKEVDRTLE and ADTEPKAEGKENS. A compositionally biased stretch (acidic residues) spans 796–806; that stretch reads RDDDELADASD. Positions 813–877 constitute a Myb-like domain; sequence PKRVRKNKWK…QCKSLWASLI (65 aa).

This sequence belongs to the metallo-beta-lactamase superfamily. RNA-metabolizing metallo-beta-lactamase-like family. Bacterial RNase J subfamily. Homodimer. May be a subunit of the RNA degradosome. Requires Zn(2+) as cofactor. Moslty expressed in inflorescences, seedlings, leaves, flowers and flower buds, and, to a lower extent, in stems, siliques and roots.

The protein resides in the plastid. It is found in the chloroplast. In terms of biological role, essential protein required during embryogenesis, especially in initiating and maintaining the organization of shoot apical meristems (SAMs), cotyledons, and hypocotyls. Involved in auxin-mediated pathways during embryogenesis. RNase that has both endonuclease and 5'-3' exonuclease activities. Involved in RNA surveillance to prevent overaccumulation of antisense RNA. Probably involved in maturation of rRNA and in some organisms also mRNA maturation and/or decay. The sequence is that of Ribonuclease J from Arabidopsis thaliana (Mouse-ear cress).